Consider the following 205-residue polypeptide: Adenylyl-sulfate kinase (205 aa).

Residue 31–38 (GLSGAGKS) coordinates ATP. The active-site Phosphoserine intermediate is the Ser-105.

The protein belongs to the APS kinase family.

The catalysed reaction is adenosine 5'-phosphosulfate + ATP = 3'-phosphoadenylyl sulfate + ADP + H(+). It participates in sulfur metabolism; hydrogen sulfide biosynthesis; sulfite from sulfate: step 2/3. In terms of biological role, catalyzes the synthesis of activated sulfate. This Shewanella baltica (strain OS195) protein is Adenylyl-sulfate kinase.